The sequence spans 153 residues: Large ribosomal subunit protein uL30 (153 aa).

The protein belongs to the universal ribosomal protein uL30 family. Part of the 50S ribosomal subunit.

The protein is Large ribosomal subunit protein uL30 of Methanocella arvoryzae (strain DSM 22066 / NBRC 105507 / MRE50).